The primary structure comprises 206 residues: MKKTLIIGVTGGSASGKTSVSHAILETFSNERIAMIEHDSYYKDQSHLTFEERTKTNYDHPLAFDTDYLIAQLKELQYGRAVDIPIYDYAKHTRSQETYRQEPVDVLIVEGILVLEDERLRDLMDIKIFVDTDDDVRIIRRIRRDIEERGRTLDSVITQYLEAVKPMYHQFIEPTKRYADVIIPEGVSNTVGVDIITTKIASILND.

ATP is bound at residue Gly-11–Thr-18.

Belongs to the uridine kinase family.

The protein localises to the cytoplasm. It catalyses the reaction uridine + ATP = UMP + ADP + H(+). The catalysed reaction is cytidine + ATP = CMP + ADP + H(+). It functions in the pathway pyrimidine metabolism; CTP biosynthesis via salvage pathway; CTP from cytidine: step 1/3. Its pathway is pyrimidine metabolism; UMP biosynthesis via salvage pathway; UMP from uridine: step 1/1. The protein is Uridine kinase of Lactococcus lactis subsp. cremoris (strain MG1363).